Reading from the N-terminus, the 208-residue chain is MAKLLHLSCSPRPDSESSAGARVFLDGFRQMRPDWDIDVMDLWRERMPEFAGPIVEAKYARMKAEAFDDAQRDSFAEAERMATRLSLAERVLISTPMWNFGIPYKLKQWFDIIVQPGLTFRYDPASGYLPLLKDRPTLVILASGSDFVTGMNRGRTDMATPYLREALRFIGISDVRFVPIGPTTGPADPILAARETAYRRLREIATWF.

Residues Ser-10, 15 to 17 (SES), and 97 to 100 (MWNF) contribute to the FMN site.

The protein belongs to the azoreductase type 1 family. As to quaternary structure, homodimer. FMN is required as a cofactor.

It catalyses the reaction 2 a quinone + NADH + H(+) = 2 a 1,4-benzosemiquinone + NAD(+). The enzyme catalyses N,N-dimethyl-1,4-phenylenediamine + anthranilate + 2 NAD(+) = 2-(4-dimethylaminophenyl)diazenylbenzoate + 2 NADH + 2 H(+). In terms of biological role, quinone reductase that provides resistance to thiol-specific stress caused by electrophilic quinones. Its function is as follows. Also exhibits azoreductase activity. Catalyzes the reductive cleavage of the azo bond in aromatic azo compounds to the corresponding amines. The chain is FMN-dependent NADH:quinone oxidoreductase 1 from Bradyrhizobium diazoefficiens (strain JCM 10833 / BCRC 13528 / IAM 13628 / NBRC 14792 / USDA 110).